The sequence spans 256 residues: BI1-like protein (256 aa).

Transmembrane regions (helical) follow at residues 53–73 (VYGI…VVVL), 85–105 (PGIL…LHIY), 113–133 (LILL…SCAM), 138–158 (IVLQ…AYTF), 167–187 (FSFL…TSFI), 189–209 (MFFP…ALVF), and 228–248 (EYIL…LTIL).

Belongs to the BI1 family.

Its subcellular location is the membrane. The protein is BI1-like protein of Arabidopsis thaliana (Mouse-ear cress).